The sequence spans 157 residues: Transcription elongation factor GreA (157 aa).

Positions 1–24 (MDKFPMTPEGYHALDEELKRRQQE) are disordered. The segment covering 12–24 (HALDEELKRRQQE) has biased composition (basic and acidic residues). Positions 53–73 (EAQSLNEGRIAELEDKLSRAE) form a coiled coil.

This sequence belongs to the GreA/GreB family.

Its function is as follows. Necessary for efficient RNA polymerase transcription elongation past template-encoded arresting sites. The arresting sites in DNA have the property of trapping a certain fraction of elongating RNA polymerases that pass through, resulting in locked ternary complexes. Cleavage of the nascent transcript by cleavage factors such as GreA or GreB allows the resumption of elongation from the new 3'terminus. GreA releases sequences of 2 to 3 nucleotides. The sequence is that of Transcription elongation factor GreA from Beijerinckia indica subsp. indica (strain ATCC 9039 / DSM 1715 / NCIMB 8712).